The chain runs to 126 residues: MPEPVKSVPAPKKGSKKAVTKAQKKDGKKRKRSRKESYSVYVYKVLKQVHPDTGISSKAMGIMNSFVNDIFERIASEASRLAHYNKRSTITSREIQTAVRLLLPGELAKHAVSEGTKAVTKYTSSK.

The segment at 1–36 (MPEPVKSVPAPKKGSKKAVTKAQKKDGKKRKRSRKE) is disordered. Pro-2 is modified (N-acetylproline). The residue at position 3 (Glu-3) is an ADP-ribosyl glutamic acid. At Lys-6 the chain carries N6-(2-hydroxyisobutyryl)lysine; alternate. Lys-6 carries the N6-(beta-hydroxybutyryl)lysine; alternate modification. Lys-6 bears the N6-acetyllysine; alternate mark. Lys-6 carries the N6-butyryllysine; alternate modification. Lys-6 bears the N6-crotonyllysine; alternate mark. Lys-6 is modified (N6-lactoyllysine; alternate). Residue Lys-6 forms a Glycyl lysine isopeptide (Lys-Gly) (interchain with G-Cter in SUMO2); alternate linkage. Ser-7 is subject to ADP-ribosylserine. Lys-12 is modified (N6-(beta-hydroxybutyryl)lysine; alternate). N6-acetyllysine; alternate occurs at positions 12 and 13. An N6-crotonyllysine; alternate mark is found at Lys-12 and Lys-13. An N6-lactoyllysine; alternate modification is found at Lys-12. At Lys-13 the chain carries N6-(2-hydroxyisobutyryl)lysine; alternate. Residue Ser-15 is modified to Phosphoserine; by STK4/MST1. Residues Lys-16, Lys-17, Lys-21, and Lys-24 each carry the N6-acetyllysine; alternate modification. An N6-crotonyllysine; alternate mark is found at Lys-16, Lys-17, Lys-21, and Lys-24. 4 positions are modified to N6-lactoyllysine; alternate: Lys-16, Lys-17, Lys-21, and Lys-24. Residue Lys-17 is modified to N6-glutaryllysine; alternate. N6-(2-hydroxyisobutyryl)lysine; alternate occurs at positions 21 and 24. Lys-21 is subject to N6-(beta-hydroxybutyryl)lysine; alternate. Lys-21 carries the post-translational modification N6-butyryllysine; alternate. Lys-21 is covalently cross-linked (Glycyl lysine isopeptide (Lys-Gly) (interchain with G-Cter in SUMO2); alternate). Residue Lys-25 is modified to N6-(2-hydroxyisobutyryl)lysine. Lys-35 is subject to N6-(2-hydroxyisobutyryl)lysine; alternate. At Lys-35 the chain carries N6-(beta-hydroxybutyryl)lysine; alternate. Position 35 is an N6-crotonyllysine; alternate (Lys-35). An N6-glutaryllysine; alternate modification is found at Lys-35. The residue at position 35 (Lys-35) is an N6-succinyllysine; alternate. Lys-35 participates in a covalent cross-link: Glycyl lysine isopeptide (Lys-Gly) (interchain with G-Cter in ubiquitin); alternate. Glu-36 is subject to PolyADP-ribosyl glutamic acid. At Ser-37 the chain carries Phosphoserine; by AMPK. N6-(2-hydroxyisobutyryl)lysine; alternate occurs at positions 44, 47, and 58. Lys-44 is subject to N6-lactoyllysine; alternate. Lys-44 and Lys-47 each carry N6-glutaryllysine; alternate. Lys-47 is modified (N6-methyllysine; alternate). Position 58 is an N6,N6-dimethyllysine; alternate (Lys-58). Arg-80 is modified (dimethylated arginine). At Lys-86 the chain carries N6-(2-hydroxyisobutyryl)lysine; alternate. Lys-86 carries the N6-acetyllysine; alternate modification. Position 86 is an N6-lactoyllysine; alternate (Lys-86). Residue Lys-86 is modified to N6,N6,N6-trimethyllysine; alternate. Omega-N-methylarginine occurs at positions 87 and 93. N6-(2-hydroxyisobutyryl)lysine; alternate is present on Lys-109. At Lys-109 the chain carries N6-(beta-hydroxybutyryl)lysine; alternate. Position 109 is an N6-lactoyllysine; alternate (Lys-109). At Lys-109 the chain carries N6-glutaryllysine; alternate. Lys-109 is modified (N6-methyllysine; alternate). O-linked (GlcNAc) serine glycosylation occurs at Ser-113. Thr-116 is modified (phosphothreonine). N6-(2-hydroxyisobutyryl)lysine; alternate occurs at positions 117 and 121. Lys-117 bears the N6-(beta-hydroxybutyryl)lysine; alternate mark. 2 positions are modified to N6-lactoyllysine; alternate: Lys-117 and Lys-121. 2 positions are modified to N6-glutaryllysine; alternate: Lys-117 and Lys-121. An N6-succinyllysine; alternate mark is found at Lys-117 and Lys-121. Residue Lys-117 is modified to N6-methylated lysine; alternate. Lys-121 is covalently cross-linked (Glycyl lysine isopeptide (Lys-Gly) (interchain with G-Cter in ubiquitin); alternate).

It belongs to the histone H2B family. In terms of assembly, the nucleosome is a histone octamer containing two molecules each of H2A, H2B, H3 and H4 assembled in one H3-H4 heterotetramer and two H2A-H2B heterodimers. The octamer wraps approximately 147 bp of DNA. Monoubiquitination at Lys-35 (H2BK34Ub) by the MSL1/MSL2 dimer is required for histone H3 'Lys-4' (H3K4me) and 'Lys-79' (H3K79me) methylation and transcription activation at specific gene loci, such as HOXA9 and MEIS1 loci. Similarly, monoubiquitination at Lys-121 (H2BK120Ub) by the RNF20/40 complex gives a specific tag for epigenetic transcriptional activation and is also prerequisite for histone H3 'Lys-4' and 'Lys-79' methylation. It also functions cooperatively with the FACT dimer to stimulate elongation by RNA polymerase II. H2BK120Ub also acts as a regulator of mRNA splicing: deubiquitination by USP49 is required for efficient cotranscriptional splicing of a large set of exons. In terms of processing, phosphorylated on Ser-15 (H2BS14ph) by STK4/MST1 during apoptosis; which facilitates apoptotic chromatin condensation. Also phosphorylated on Ser-15 in response to DNA double strand breaks (DSBs), and in correlation with somatic hypermutation and immunoglobulin class-switch recombination. Phosphorylation at Ser-37 (H2BS36ph) by AMPK in response to stress promotes transcription. Post-translationally, glcNAcylation at Ser-113 promotes monoubiquitination of Lys-121. It fluctuates in response to extracellular glucose, and associates with transcribed genes. ADP-ribosylated by PARP1 or PARP2 on Ser-7 (H2BS6ADPr) in response to DNA damage. H2BS6ADPr promotes recruitment of CHD1L. Mono-ADP-ribosylated on Glu-3 (H2BE2ADPr) by PARP3 in response to single-strand breaks. Poly ADP-ribosylation on Glu-36 (H2BE35ADPr) by PARP1 regulates adipogenesis: it inhibits phosphorylation at Ser-37 (H2BS36ph), thereby blocking expression of pro-adipogenetic genes. In terms of processing, crotonylation (Kcr) is specifically present in male germ cells and marks testis-specific genes in post-meiotic cells, including X-linked genes that escape sex chromosome inactivation in haploid cells. Crotonylation marks active promoters and enhancers and confers resistance to transcriptional repressors. It is also associated with post-meiotically activated genes on autosomes. Post-translationally, hydroxybutyrylation of histones is induced by starvation. Lactylated in macrophages by EP300/P300 by using lactoyl-CoA directly derived from endogenous or exogenous lactate, leading to stimulates gene transcription.

It localises to the nucleus. It is found in the chromosome. Its function is as follows. Core component of nucleosome. Nucleosomes wrap and compact DNA into chromatin, limiting DNA accessibility to the cellular machineries which require DNA as a template. Histones thereby play a central role in transcription regulation, DNA repair, DNA replication and chromosomal stability. DNA accessibility is regulated via a complex set of post-translational modifications of histones, also called histone code, and nucleosome remodeling. This is Histone H2B type 1-P (Hist1h2bp) from Mus musculus (Mouse).